Here is a 58-residue protein sequence, read N- to C-terminus: uncharacterized protein (58 aa).

Residues 23 to 51 (TTTSTSTTTTSTTTSTTTSTTTTTTTTTT) are compositionally biased toward low complexity. The disordered stretch occupies residues 23–58 (TTTSTSTTTTSTTTSTTTSTTTTTTTTTTKDFNTET).

This is an uncharacterized protein from Dictyostelium discoideum (Social amoeba).